The following is a 167-amino-acid chain: UPF0303 protein mlr5144 (167 aa).

Belongs to the UPF0303 family.

In Mesorhizobium japonicum (strain LMG 29417 / CECT 9101 / MAFF 303099) (Mesorhizobium loti (strain MAFF 303099)), this protein is UPF0303 protein mlr5144.